The following is a 144-amino-acid chain: MEKFLDINEIKRIIPHRYPFLLVDKITELEEGKSAVGYKNVTVNEYFFNGHFPEEPVMPGVLIIEALAQVGAVAILSKEEFKGKIAYFGGINKAKFRKKVVPGDELKLSIELTKIKGVAGVGKAVATVDGKVAAEAELLFVIGK.

The active site involves H51.

This sequence belongs to the thioester dehydratase family. FabZ subfamily.

It is found in the cytoplasm. The enzyme catalyses a (3R)-hydroxyacyl-[ACP] = a (2E)-enoyl-[ACP] + H2O. Functionally, involved in unsaturated fatty acids biosynthesis. Catalyzes the dehydration of short chain beta-hydroxyacyl-ACPs and long chain saturated and unsaturated beta-hydroxyacyl-ACPs. This Clostridium botulinum (strain Okra / Type B1) protein is 3-hydroxyacyl-[acyl-carrier-protein] dehydratase FabZ.